The following is a 70-amino-acid chain: Large ribosomal subunit protein bL31 (70 aa).

Lys8 is subject to N6-acetyllysine. Positions 16, 18, 37, and 40 each coordinate Zn(2+).

Belongs to the bacterial ribosomal protein bL31 family. Type A subfamily. In terms of assembly, part of the 50S ribosomal subunit. Zn(2+) serves as cofactor.

In terms of biological role, binds the 23S rRNA. The protein is Large ribosomal subunit protein bL31 of Escherichia coli O6:K15:H31 (strain 536 / UPEC).